The primary structure comprises 365 residues: tRNA 2-selenouridine synthase (365 aa).

The Rhodanese domain maps to 12–136 (FLDDVPMMDM…LRTFLLDTTQ (125 aa)). The active-site S-selanylcysteine intermediate is cysteine 95.

This sequence belongs to the SelU family. Monomer.

The enzyme catalyses 5-methylaminomethyl-2-thiouridine(34) in tRNA + selenophosphate + (2E)-geranyl diphosphate + H2O + H(+) = 5-methylaminomethyl-2-selenouridine(34) in tRNA + (2E)-thiogeraniol + phosphate + diphosphate. The catalysed reaction is 5-methylaminomethyl-2-thiouridine(34) in tRNA + (2E)-geranyl diphosphate = 5-methylaminomethyl-S-(2E)-geranyl-thiouridine(34) in tRNA + diphosphate. It carries out the reaction 5-methylaminomethyl-S-(2E)-geranyl-thiouridine(34) in tRNA + selenophosphate + H(+) = 5-methylaminomethyl-2-(Se-phospho)selenouridine(34) in tRNA + (2E)-thiogeraniol. It catalyses the reaction 5-methylaminomethyl-2-(Se-phospho)selenouridine(34) in tRNA + H2O = 5-methylaminomethyl-2-selenouridine(34) in tRNA + phosphate. Its function is as follows. Involved in the post-transcriptional modification of the uridine at the wobble position (U34) of tRNA(Lys), tRNA(Glu) and tRNA(Gln). Catalyzes the conversion of 2-thiouridine (S2U-RNA) to 2-selenouridine (Se2U-RNA). Acts in a two-step process involving geranylation of 2-thiouridine (S2U) to S-geranyl-2-thiouridine (geS2U) and subsequent selenation of the latter derivative to 2-selenouridine (Se2U) in the tRNA chain. The polypeptide is tRNA 2-selenouridine synthase (Pseudomonas putida (strain W619)).